The primary structure comprises 199 residues: Shikimate kinase (199 aa).

Residue 14–19 (GSGKST) coordinates ATP. Serine 18 is a binding site for Mg(2+). 3 residues coordinate substrate: aspartate 36, arginine 60, and glycine 82. ATP is bound at residue arginine 120. Arginine 147 contacts substrate.

The protein belongs to the shikimate kinase family. Monomer. The cofactor is Mg(2+).

The protein localises to the cytoplasm. The enzyme catalyses shikimate + ATP = 3-phosphoshikimate + ADP + H(+). It functions in the pathway metabolic intermediate biosynthesis; chorismate biosynthesis; chorismate from D-erythrose 4-phosphate and phosphoenolpyruvate: step 5/7. In terms of biological role, catalyzes the specific phosphorylation of the 3-hydroxyl group of shikimic acid using ATP as a cosubstrate. This Chlorobium limicola (strain DSM 245 / NBRC 103803 / 6330) protein is Shikimate kinase.